The sequence spans 406 residues: Tryptophan synthase beta chain (406 aa).

At Lys-99 the chain carries N6-(pyridoxal phosphate)lysine.

Belongs to the TrpB family. As to quaternary structure, tetramer of two alpha and two beta chains. Requires pyridoxal 5'-phosphate as cofactor.

The enzyme catalyses (1S,2R)-1-C-(indol-3-yl)glycerol 3-phosphate + L-serine = D-glyceraldehyde 3-phosphate + L-tryptophan + H2O. Its pathway is amino-acid biosynthesis; L-tryptophan biosynthesis; L-tryptophan from chorismate: step 5/5. Functionally, the beta subunit is responsible for the synthesis of L-tryptophan from indole and L-serine. The polypeptide is Tryptophan synthase beta chain (Rhizobium meliloti (strain 1021) (Ensifer meliloti)).